We begin with the raw amino-acid sequence, 707 residues long: MMVHMEVSWLRVLLDNISSYLSLSSMDDLSSNPAHKYYTRGEDIGKLIKPVLENLIDSDAAPSELLNNGFEELAQYVDELREQFQSWQPLSTRIFYVLRIESLASKLRESSLEVFQLLKHCEQHLPADLISPSFEECIELVKLVARDEISYTIDQALKDQKKGVGPTSEVLVKIAESTGLRSNQEILVEGVVLTNMKEDAELTDNDTEAEYLDGLISLTTQMHEYLSDIKQAQLRCPVRVPSDFRCSLSLELMTDPVIVASGQTFERVFIQKWIDMGLMVCPKTRQALSHTTLTPNFIVRAFLASWCETNNVYPPDPLELIHSSEPFPLLVESVRASSSENGHSESLDAEELRQVFSRSASAPGIVSEVVCKTKRNNNAAADRSLTRSNTPWKFPEERHWRHPGIIPATVRETGSSSSIETEVKKLIDDLKSSSLDTQREATARIRILARNSTDNRIVIARCEAIPSLVSLLYSTDERIQADAVTCLLNLSINDNNKSLIAESGAIVPLIHVLKTGYLEEAKANSAATLFSLSVIEEYKTEIGEAGAIEPLVDLLGSGSLSGKKDAATALFNLSIHHENKTKVIEAGAVRYLVELMDPAFGMVEKAVVVLANLATVREGKIAIGEEGGIPVLVEVVELGSARGKENATAALLQLCTHSPKFCNNVIREGVIPPLVALTKSGTARGKEKAQNLLKYFKAHRQSNQRRG.

One can recognise a U-box domain in the interval 239–313; sequence RVPSDFRCSL…ASWCETNNVY (75 aa). 5 ARM repeats span residues 453-492, 494-534, 536-575, 577-615, and 617-656; these read TDNR…NLSI, DNNK…SLSV, EEYK…NLSI, HENK…NLAT, and REGK…QLCT.

It carries out the reaction S-ubiquitinyl-[E2 ubiquitin-conjugating enzyme]-L-cysteine + [acceptor protein]-L-lysine = [E2 ubiquitin-conjugating enzyme]-L-cysteine + N(6)-ubiquitinyl-[acceptor protein]-L-lysine.. It participates in protein modification; protein ubiquitination. In terms of biological role, functions as an E3 ubiquitin ligase. The protein is U-box domain-containing protein 2 (PUB2) of Arabidopsis thaliana (Mouse-ear cress).